The primary structure comprises 166 residues: Ribosome maturation factor RimM (166 aa).

The 73-residue stretch at 91-163 (DDGFYDHELE…TCVITPPEGL (73 aa)) folds into the PRC barrel domain.

Belongs to the RimM family. As to quaternary structure, binds ribosomal protein uS19.

It localises to the cytoplasm. In terms of biological role, an accessory protein needed during the final step in the assembly of 30S ribosomal subunit, possibly for assembly of the head region. Essential for efficient processing of 16S rRNA. May be needed both before and after RbfA during the maturation of 16S rRNA. It has affinity for free ribosomal 30S subunits but not for 70S ribosomes. This Corynebacterium diphtheriae (strain ATCC 700971 / NCTC 13129 / Biotype gravis) protein is Ribosome maturation factor RimM.